Reading from the N-terminus, the 242-residue chain is DNA repair protein RecO (242 aa).

It belongs to the RecO family. As to quaternary structure, monomer.

Its function is as follows. Involved in DNA repair and RecF pathway recombination. This chain is DNA repair protein RecO, found in Salmonella enteritidis PT4 (strain P125109).